A 133-amino-acid chain; its full sequence is Small ribosomal subunit protein uS8 (133 aa).

Belongs to the universal ribosomal protein uS8 family. Part of the 30S ribosomal subunit. Contacts proteins S5 and S12.

In terms of biological role, one of the primary rRNA binding proteins, it binds directly to 16S rRNA central domain where it helps coordinate assembly of the platform of the 30S subunit. This Trichodesmium erythraeum (strain IMS101) protein is Small ribosomal subunit protein uS8.